The following is a 110-amino-acid chain: MFELKTVALFVITALAEIIGCYLPYLWLNQNKSPLLLIPAAISLALFAWLLTLHPSAAGRVYAAYGGVYIFVAIFWLWVVDDIIPSNWDFLGASVALLGMAIIMFAPRST.

4 helical membrane-spanning segments follow: residues Val-7–Trp-27, Ser-33–Leu-53, Val-61–Asp-81, and Ile-83–Ile-103.

Belongs to the UPF0060 family.

The protein resides in the cell inner membrane. This Methylobacillus flagellatus (strain ATCC 51484 / DSM 6875 / VKM B-1610 / KT) protein is UPF0060 membrane protein Mfla_2554.